We begin with the raw amino-acid sequence, 562 residues long: Probable sesquiterpene synthase (562 aa).

Residues aspartate 315, aspartate 319, and glutamate 467 each contribute to the Mg(2+) site. A DDXXD motif motif is present at residues 315-319 (DDIYD).

The protein belongs to the terpene synthase family. Tpsa subfamily. It depends on Mg(2+) as a cofactor. Requires Mn(2+) as cofactor.

In terms of biological role, sesquiterpene synthase. In Santalum spicatum (Australian sandalwood), this protein is Probable sesquiterpene synthase (SesquiTPS).